A 523-amino-acid chain; its full sequence is UDP-glucuronosyltransferase 3A1 (523 aa).

Positions 1–22 are cleaved as a signal peptide; sequence MAGQQALLLFGFILPGLLFSEA. At 23–483 the chain is on the extracellular side; sequence AKILTVSLVG…HAFQQPWYEQ (461 aa). A glycan (N-linked (GlcNAc...) asparagine) is linked at Asn52. Residues 484–504 traverse the membrane as a helical segment; it reads YLLDVFLFLLVVTLGTMWLCG. At 505–523 the chain is on the cytoplasmic side; sequence KLLGLVARWLCGARKLKKA.

It belongs to the UDP-glycosyltransferase family.

It localises to the membrane. The enzyme catalyses glucuronate acceptor + UDP-alpha-D-glucuronate = acceptor beta-D-glucuronoside + UDP + H(+). Functionally, UDP-glucuronosyltransferases catalyze phase II biotransformation reactions in which lipophilic substrates are conjugated with glucuronic acid to increase water solubility and enhance excretion. They are of major importance in the conjugation and subsequent elimination of potentially toxic xenobiotics and endogenous compounds. The sequence is that of UDP-glucuronosyltransferase 3A1 (UGT3A1) from Bos taurus (Bovine).